We begin with the raw amino-acid sequence, 42 residues long: Beta-2-microglobulin (42 aa).

An Ig-like C1-type domain is found at P5–B42.

As to quaternary structure, heterodimer of an alpha chain and a beta chain. Beta-2-microglobulin is the beta-chain of major histocompatibility complex class I molecules.

The protein localises to the secreted. Its function is as follows. Component of the class I major histocompatibility complex (MHC). Involved in the presentation of peptide antigens to the immune system. This chain is Beta-2-microglobulin (B2M), found in Canis lupus familiaris (Dog).